Reading from the N-terminus, the 202-residue chain is Glycerol-3-phosphate acyltransferase (202 aa).

5 helical membrane passes run 3-23, 87-107, 118-138, 144-164, and 167-187; these read NLII…LILA, LLWS…YLLF, GAMI…WVVI, ISSL…FIFN, and LEIH…YKHL.

It belongs to the PlsY family. In terms of assembly, probably interacts with PlsX.

The protein resides in the cell inner membrane. The catalysed reaction is an acyl phosphate + sn-glycerol 3-phosphate = a 1-acyl-sn-glycero-3-phosphate + phosphate. It participates in lipid metabolism; phospholipid metabolism. Functionally, catalyzes the transfer of an acyl group from acyl-phosphate (acyl-PO(4)) to glycerol-3-phosphate (G3P) to form lysophosphatidic acid (LPA). This enzyme utilizes acyl-phosphate as fatty acyl donor, but not acyl-CoA or acyl-ACP. This Campylobacter jejuni (strain RM1221) protein is Glycerol-3-phosphate acyltransferase.